A 689-amino-acid chain; its full sequence is MSEKTFLVEIGTEELPPKALRSLAESFAANFTAELDNAGLAHGTVQWFAAPRRLALKVANLAEAQPDREIEKRGPAIAQAFDAEGKPSKAAEGWARGCGITVDQAERLTTDKGEWLLYRAHVKGESTEALLPNMVATSLAKLPIPKLMRWGASDVHFVRPVHTVTLLLGDKVIPATILGIQSDRVIRGHRFMGEPEFTIDNADQYPEILRERGKVIADYEERKAKIKADAEEAARKIGGNADLSESLLEEVASLVEWPVVLTAKFEEKFLAVPAEALVYTMKGDQKYFPVYANDGKLLPNFIFVANIESKDPQQIISGNEKVVRPRLADAEFFFNTDRKKRLEDNLPRLQTVLFQQQLGTLRDKTDRIQALAGWIAEQIGADVNHATRAGLLSKCDLMTNMVFEFTDTQGVMGMHYARHDGEAEDVAVALNEQYQPRFAGDDLPSNPVACALAIADKMDTLAGIFGIGQHPKGDKDPFALRRAALGVLRIIVEKNLNLDLQTLTEEAVRLYGDKLTNANVVDDVIDFMLGRFRAWYQDEGYTVDTIQAVLARRPTRPADFDARMKAVSHFRTLDAAAALAAANKRVSNILAKSDEVLSDRVNASTLKEPEEIKLAMQVVVLRDKLEPYFAEGRYQDALVELAELREPVDAFFDKVMVMVDDKELRLNRLTMLEKLRELFLRVADISLLQ.

This sequence belongs to the class-II aminoacyl-tRNA synthetase family. In terms of assembly, tetramer of two alpha and two beta subunits.

Its subcellular location is the cytoplasm. It catalyses the reaction tRNA(Gly) + glycine + ATP = glycyl-tRNA(Gly) + AMP + diphosphate. This Escherichia coli O139:H28 (strain E24377A / ETEC) protein is Glycine--tRNA ligase beta subunit.